The chain runs to 186 residues: GMP synthase [glutamine-hydrolyzing] subunit A (186 aa).

The Glutamine amidotransferase type-1 domain occupies 3–186 (MILIINNHGQ…FENFYDVCRS (184 aa)). Catalysis depends on Cys-77, which acts as the Nucleophile. Residues His-164 and Glu-166 contribute to the active site.

Heterodimer composed of a glutamine amidotransferase subunit (A) and a GMP-binding subunit (B).

The enzyme catalyses XMP + L-glutamine + ATP + H2O = GMP + L-glutamate + AMP + diphosphate + 2 H(+). The protein operates within purine metabolism; GMP biosynthesis; GMP from XMP (L-Gln route): step 1/1. Catalyzes the synthesis of GMP from XMP. The protein is GMP synthase [glutamine-hydrolyzing] subunit A of Methanothermobacter thermautotrophicus (strain ATCC 29096 / DSM 1053 / JCM 10044 / NBRC 100330 / Delta H) (Methanobacterium thermoautotrophicum).